A 438-amino-acid chain; its full sequence is MGGCAGSRRRLSDSEGEETVPEPRLPLLDHQGAHWKNAVGFWLLGLCNNFSYVVMLSAAHDILSHERTSGNQSHVDPGPAPIPHNSSSRFDCNSVSTAAVLLADILPTLVIKLLAPLGLHLLPYSPRVLVSGICAAGSFVLVAFSHSVGTSLCGVVLASISSGLGEVTFLSLTAFYPRAVISWWSSGTGGAGLLGALSYLGLTQAGLSPQQTLLSMLGIPALLLASYFLLLTSPEAQDPGGEEEAESSARQPLIRTEAPESKPGSSSSLSLRERWTVFKGLLWYIVPLVVVYFAEYFINQGLFELLFFRNTSLSHAQQYRWYQMLYQAGVFASRSSLRCCHIRFTWALALLQCLNLAFLLADVWFGFLLSIYFVFLIILYEGLLGGAAYVNTFHNIALETSDEHREFAMATTCISDTLGISLSGLLALPLHDFLCQLS.

A disordered region spans residues 1 to 25 (MGGCAGSRRRLSDSEGEETVPEPRL). Topologically, residues 1–37 (MGGCAGSRRRLSDSEGEETVPEPRLPLLDHQGAHWKN) are cytoplasmic. Residues serine 12 and serine 14 each carry the phosphoserine modification. A helical transmembrane segment spans residues 38 to 58 (AVGFWLLGLCNNFSYVVMLSA). Topologically, residues 59–127 (AHDILSHERT…GLHLLPYSPR (69 aa)) are lumenal. 2 N-linked (GlcNAc...) asparagine glycosylation sites follow: asparagine 71 and asparagine 85. A helical transmembrane segment spans residues 128-148 (VLVSGICAAGSFVLVAFSHSV). Topologically, residues 149–151 (GTS) are cytoplasmic. A helical membrane pass occupies residues 152–172 (LCGVVLASISSGLGEVTFLSL). The Lumenal segment spans residues 173-182 (TAFYPRAVIS). The chain crosses the membrane as a helical span at residues 183 to 203 (WWSSGTGGAGLLGALSYLGLT). The Cytoplasmic segment spans residues 204–277 (QAGLSPQQTL…SLSLRERWTV (74 aa)). The tract at residues 237-268 (QDPGGEEEAESSARQPLIRTEAPESKPGSSSS) is disordered. The short motif at 242–244 (EEE) is the Lysosomal targeting motif element. Residues 253 to 254 (LI) carry the Lysosomal targeting motif. Required for AP1G1, AP2A2 and AP3D1 interaction motif. The chain crosses the membrane as a helical span at residues 278-298 (FKGLLWYIVPLVVVYFAEYFI). The Lumenal segment spans residues 299 to 346 (NQGLFELLFFRNTSLSHAQQYRWYQMLYQAGVFASRSSLRCCHIRFTW). Residue asparagine 310 is glycosylated (N-linked (GlcNAc...) asparagine). Residues 347–367 (ALALLQCLNLAFLLADVWFGF) traverse the membrane as a helical segment. The Cytoplasmic portion of the chain corresponds to 368-438 (LLSIYFVFLI…PLHDFLCQLS (71 aa)). Residues 409 to 419 (MATTCISDTLG) carry the Lysosomal targeting motif motif. Cysteine 435 carries the cysteine methyl ester modification. Cysteine 435 is lipidated: S-farnesyl cysteine. A propeptide spans 436-438 (QLS) (removed in mature form).

Belongs to the battenin family. Interacts with DCTN1, KIF3A, RAB7A and RILP. Interacts with CLN5. Post-translationally, highly glycosylated. In terms of processing, farnesylation is important for trafficking to lysosomes.

The protein resides in the lysosome membrane. The protein localises to the late endosome. Its subcellular location is the lysosome. In terms of biological role, mediates microtubule-dependent, anterograde transport connecting the Golgi network, endosomes, autophagosomes, lysosomes and plasma membrane, and participates in several cellular processes such as regulation of lysosomal pH, lysosome protein degradation, receptor-mediated endocytosis, autophagy, transport of proteins and lipids from the TGN, apoptosis and synaptic transmission. Facilitates the proteins transport from trans-Golgi network (TGN)-to other membrane compartments such as transport of microdomain-associated proteins to the plasma membrane, IGF2R transport to the lysosome where it regulates the CTSD release leading to regulation of CTSD maturation and thereby APP intracellular processing. Moreover regulates CTSD activity in response to osmotic stress. Also binds galactosylceramide and transports it from the trans Golgi to the rafts, which may have immediate and downstream effects on cell survival by modulating ceramide synthesis. At the plasma membrane, regulates actin-dependent events including filopodia formation, cell migration, and pinocytosis through ARF1-CDC42 pathway and also the cytoskeleton organization through interaction with MYH10 and fodrin leading to the regulation of the plasma membrane association of Na+, K+ ATPase complex. Regulates synaptic transmission in the amygdala, hippocampus, and cerebellum through regulation of synaptic vesicles density and their proximity to active zones leading to modulation of short-term plasticity and age-dependent anxious behavior, learning and memory. Regulates autophagic vacuoles (AVs) maturation by modulating the trafficking between endocytic and autophagolysosomal/lysosomal compartments, which involves vesicle fusion leading to regulation of degradation process. Also participates in cellular homeostasis of compounds such as, water, ions, amino acids, proteins and lipids in several tissue namely in brain and kidney through regulation of their transport and synthesis. The chain is Battenin from Macaca fascicularis (Crab-eating macaque).